The sequence spans 118 residues: Large ribosomal subunit protein uL18 (118 aa).

This sequence belongs to the universal ribosomal protein uL18 family. Part of the 50S ribosomal subunit; part of the 5S rRNA/L5/L18/L25 subcomplex. Contacts the 5S and 23S rRNAs.

In terms of biological role, this is one of the proteins that bind and probably mediate the attachment of the 5S RNA into the large ribosomal subunit, where it forms part of the central protuberance. This is Large ribosomal subunit protein uL18 from Dichelobacter nodosus (strain VCS1703A).